Reading from the N-terminus, the 271-residue chain is Phosphonoacetaldehyde hydrolase (271 aa).

The active-site Nucleophile is the Asp12. The Mg(2+) site is built by Asp12 and Ala14. Lys54 acts as the Schiff-base intermediate with substrate in catalysis. Asp188 contributes to the Mg(2+) binding site.

It belongs to the HAD-like hydrolase superfamily. PhnX family. As to quaternary structure, homodimer. Mg(2+) is required as a cofactor.

It carries out the reaction phosphonoacetaldehyde + H2O = acetaldehyde + phosphate + H(+). In terms of biological role, involved in phosphonate degradation. The chain is Phosphonoacetaldehyde hydrolase from Vibrio vulnificus (strain CMCP6).